The primary structure comprises 477 residues: Cysteine--tRNA ligase (477 aa).

Cysteine 29 lines the Zn(2+) pocket. The 'HIGH' region signature appears at 31–41 (PTVYDFAHIGN). Zn(2+) is bound by residues cysteine 224, histidine 249, and glutamate 253. The 'KMSKS' region signature appears at 282–286 (KMSKS). An ATP-binding site is contributed by lysine 285.

This sequence belongs to the class-I aminoacyl-tRNA synthetase family. As to quaternary structure, monomer. The cofactor is Zn(2+).

It is found in the cytoplasm. It catalyses the reaction tRNA(Cys) + L-cysteine + ATP = L-cysteinyl-tRNA(Cys) + AMP + diphosphate. In Nitrobacter winogradskyi (strain ATCC 25391 / DSM 10237 / CIP 104748 / NCIMB 11846 / Nb-255), this protein is Cysteine--tRNA ligase.